Here is a 571-residue protein sequence, read N- to C-terminus: Endonuclease/exonuclease/phosphatase family domain-containing protein 1 (571 aa).

A disordered region spans residues 1 to 20 (MGSTLGCHRSIPRDPSDLSH). G2 is lipidated: N-myristoyl glycine. Residues 11 to 20 (IPRDPSDLSH) are compositionally biased toward basic and acidic residues. 3 positions are modified to phosphoserine: S16, S21, and S25. A HhH domain is found at 38–67 (ERLNINTATEEELMTLPGVTRAVARSIVEY). S106, S110, S162, and S175 each carry phosphoserine. Positions 202–227 (SRPPSTHTNGGLTFTAKPHPSPTSLS) are disordered. The segment covering 204-213 (PPSTHTNGGL) has biased composition (polar residues). Phosphothreonine is present on T267. At S430 the chain carries Phosphoserine. Residues 548–571 (RKEGPRSGNGLTLERSEANIKHER) form a disordered region. Residues 561 to 571 (ERSEANIKHER) are compositionally biased toward basic and acidic residues.

The protein is Endonuclease/exonuclease/phosphatase family domain-containing protein 1 (EEPD1) of Bos taurus (Bovine).